Reading from the N-terminus, the 507-residue chain is Phosphoprotein (507 aa).

The tract at residues 1–48 is interaction with N0; sequence MAEEQARHVKNGLECIRALKAEPIGSLAIEEAMAAWSEISDNPGQERA. 4 disordered regions span residues 41–99, 134–163, 201–231, and 250–273; these read DNPG…PPRN, GLDG…TEGY, NNFP…IKKG, and GATQ…GNVP. S86 bears the Phosphoserine mark. Over residues 134-145 the composition is skewed to low complexity; it reads GLDGDSTLSGGD. Residues 146 to 160 are compositionally biased toward acidic residues; it reads NESENSDVDIGEPDT. S151 bears the Phosphoserine mark. Over residues 260–270 the composition is skewed to low complexity; sequence SEPSGPGAPAG. Residues 304–376 form a multimerization region; sequence GDYYDDELFS…LSSIMIAIPG (73 aa). 2 interaction with the L polymerase regions span residues 361–377 and 396–410; these read STLE…IPGL and PIIG…AEVL. A x domain (XD) region spans residues 457-507; that stretch reads GPASRSVIRSIIKSSRLEEDRKRYLMTLLDDIKGANDLAKFHQMLMKIIMK. Residues 459–507 are interaction with the nucleocapsid (N-RNA); that stretch reads ASRSVIRSIIKSSRLEEDRKRYLMTLLDDIKGANDLAKFHQMLMKIIMK.

It belongs to the morbillivirus P protein family. In terms of assembly, homotetramer. Interacts (via multimerization domain and XD domain) with polymerase L; this interaction forms the polymerase L-P complex. Interacts (via N-terminus) with N0 (via Ncore); this interaction allows P to chaperon N0 to avoid N polymerization and non-specific RNA binding before encapsidation. Interacts (via C-terminus) with N-RNA template (via Ntail); this interaction maintains the P/L complex anchored to the nucleocapsid template during the sequential transcription. Interacts (via C-terminus) with protein C this interaction allows C to associate with the ribonucleocapsid. Post-translationally, phosphorylation on serines by host CK2 is necessary for the formation of viral factories.

Essential cofactor of the RNA polymerase L that plays a central role in the transcription and replication by forming the polymerase complex with RNA polymerase L and recruiting L to the genomic N-RNA template for RNA synthesis. Also plays a central role in the encapsidation of nascent RNA chains by forming the encapsidation complex with the nucleocapsid protein N (N-P complex). Acts as a chaperone for newly synthesized free N protein, so-called N0, allowing encapsidation of nascent RNA chains during replication. The nucleoprotein protein N prevents excessive phosphorylation of P, which leads to down-regulation of viral transcription/ replication. Participates, together with N, in the formation of viral factories (viroplasms), which are large inclusions in the host cytoplasm where replication takes place. The protein is Phosphoprotein (P/V) of Measles virus (strain Edmonston) (MeV).